Here is a 105-residue protein sequence, read N- to C-terminus: Large ribosomal subunit protein uL24 (105 aa).

Belongs to the universal ribosomal protein uL24 family. In terms of assembly, part of the 50S ribosomal subunit.

In terms of biological role, one of two assembly initiator proteins, it binds directly to the 5'-end of the 23S rRNA, where it nucleates assembly of the 50S subunit. Its function is as follows. One of the proteins that surrounds the polypeptide exit tunnel on the outside of the subunit. This is Large ribosomal subunit protein uL24 from Xanthomonas oryzae pv. oryzae (strain MAFF 311018).